Consider the following 470-residue polypeptide: Zinc finger CCCH domain-containing protein 7 (470 aa).

A disordered region spans residues 122–144 (AYSKKESEKQSGQNNTSTASRNH). Residues 131 to 142 (QSGQNNTSTASR) are compositionally biased toward polar residues. C3H1-type zinc fingers lie at residues 240 to 269 (AKKKKYCQFFTRFGKCNKDDGKCPYVHDPS), 273 to 294 (VCTKFLNGLCANANCKLTHKVI), 295 to 321 (PERMPDCSYYLQGLCNNEACPYRHVHV), 322 to 349 (NPIAPICDGFLKGYCSEGDECRKKHSYN), and 350 to 372 (CPVFEATGSCSQGLKCKLHHPKN). The span at 370-381 (PKNQSKGRKRKR) shows a compositional bias: basic residues. The segment at 370 to 389 (PKNQSKGRKRKRTNEPSQKN) is disordered.

Its function is as follows. Possesses RNA-binding and ribonuclease activities in vitro. This Arabidopsis thaliana (Mouse-ear cress) protein is Zinc finger CCCH domain-containing protein 7.